A 153-amino-acid polypeptide reads, in one-letter code: Cytochrome c-type biogenesis protein CcmE (153 aa).

Topologically, residues 1–8 are cytoplasmic; sequence MATRRGRR. The helical; Signal-anchor for type II membrane protein transmembrane segment at 9-29 threads the bilayer; it reads ALLIAGGVGLLALAAALVLNA. The Periplasmic segment spans residues 30 to 153; it reads LRSNLVFFFS…PSATLQTEAR (124 aa). 2 residues coordinate heme: histidine 124 and tyrosine 128.

It belongs to the CcmE/CycJ family.

Its subcellular location is the cell inner membrane. In terms of biological role, heme chaperone required for the biogenesis of c-type cytochromes. Transiently binds heme delivered by CcmC and transfers the heme to apo-cytochromes in a process facilitated by CcmF and CcmH. The protein is Cytochrome c-type biogenesis protein CcmE of Bordetella bronchiseptica (strain ATCC BAA-588 / NCTC 13252 / RB50) (Alcaligenes bronchisepticus).